Reading from the N-terminus, the 421-residue chain is Monopolin complex subunit mde4 (421 aa).

2 disordered regions span residues 122–158 (QKSN…NKDE) and 224–316 (DRKL…MTVS). Residues 133–149 (VSQNRLRGSLDTVSSPS) show a composition bias toward polar residues. Positions 224–238 (DRKLRMQKKSTERKS) are enriched in basic and acidic residues. The segment covering 262-287 (RQPNATSGSPLSVTPFLQKTSTSIGL) has biased composition (polar residues). Positions 288-304 (SSSPPQSSPSAQSSQPF) are enriched in low complexity.

As to quaternary structure, component of a monopolin-like complex composed of pcs1 and mde4. The complex associates with the kinetochore.

Its subcellular location is the nucleus. The protein localises to the chromosome. It is found in the centromere. In terms of biological role, the monopolin-like pcs1/mde4 complex is essential for accurate chromosome segregation during mitosis and meiosis II. May clamp together microtubule binding sites on the same kinetochore, preventing merotelic attachment of microtubules. The chain is Monopolin complex subunit mde4 (mde4) from Schizosaccharomyces pombe (strain 972 / ATCC 24843) (Fission yeast).